The chain runs to 228 residues: Phosphoglycolate phosphatase (228 aa).

Asp-12 acts as the Nucleophile in catalysis. The Mg(2+) site is built by Asp-12, Asp-14, and Asp-177.

The protein belongs to the HAD-like hydrolase superfamily. CbbY/CbbZ/Gph/YieH family. Mg(2+) is required as a cofactor.

It carries out the reaction 2-phosphoglycolate + H2O = glycolate + phosphate. It functions in the pathway organic acid metabolism; glycolate biosynthesis; glycolate from 2-phosphoglycolate: step 1/1. Functionally, specifically catalyzes the dephosphorylation of 2-phosphoglycolate. Is involved in the dissimilation of the intracellular 2-phosphoglycolate formed during the DNA repair of 3'-phosphoglycolate ends, a major class of DNA lesions induced by oxidative stress. This chain is Phosphoglycolate phosphatase, found in Vibrio vulnificus (strain YJ016).